Here is a 387-residue protein sequence, read N- to C-terminus: WD repeat-containing protein 89 (387 aa).

WD repeat units lie at residues 21–65 (KEPT…VLRE), 68–107 (GYPGLLNGVRFANSCDSVYSACTDGTVKCWDARVAREKPV), 112–156 (GYPS…QDLS), 168–208 (THSD…EEDA), 214–254 (NSIS…TDEP), and 319–358 (GHAATVRSFCWNVQDDSLLTGGEDAQLLLWKPGAIEKTFT).

In Pongo abelii (Sumatran orangutan), this protein is WD repeat-containing protein 89 (WDR89).